A 102-amino-acid chain; its full sequence is Urease subunit beta (102 aa).

It belongs to the urease beta subunit family. As to quaternary structure, heterotrimer of UreA (gamma), UreB (beta) and UreC (alpha) subunits. Three heterotrimers associate to form the active enzyme.

It localises to the cytoplasm. It carries out the reaction urea + 2 H2O + H(+) = hydrogencarbonate + 2 NH4(+). It participates in nitrogen metabolism; urea degradation; CO(2) and NH(3) from urea (urease route): step 1/1. The protein is Urease subunit beta of Alteromonas mediterranea (strain DSM 17117 / CIP 110805 / LMG 28347 / Deep ecotype).